The following is a 983-amino-acid chain: UPF0182 protein KRH_08700 (983 aa).

The next 7 membrane-spanning stretches (helical) occupy residues 22 to 42 (GALLPTVIAVVVLIALFVGFT), 67 to 87 (VIGLFVAAALIVAALMFLSLW), 116 to 136 (VVMVAVPLIFGLFAASTVATQ), 172 to 192 (LLIGFLVTALLLAGVAGLLMH), 213 to 233 (VHLGSIVAAFLALQAVNFWLD), 261 to 281 (GILAVAALLVAVLFVVAGFIG), and 288 to 308 (IGAAMLVVVAVVAGGLYPWAI). The tract at residues 893 to 959 (GAKTDTGAGV…DKAMKDGDWT (67 aa)) is disordered. The segment covering 947-959 (QDSDKAMKDGDWT) has biased composition (basic and acidic residues).

It belongs to the UPF0182 family.

Its subcellular location is the cell membrane. The protein is UPF0182 protein KRH_08700 of Kocuria rhizophila (strain ATCC 9341 / DSM 348 / NBRC 103217 / DC2201).